A 374-amino-acid chain; its full sequence is Bifunctional enzyme IspD/IspF (374 aa).

The interval Met-1–Phe-213 is 2-C-methyl-D-erythritol 4-phosphate cytidylyltransferase. The tract at residues Phe-214–Arg-374 is 2-C-methyl-D-erythritol 2,4-cyclodiphosphate synthase. Residues Asp-220 and His-222 each contribute to the a divalent metal cation site. Residues Asp-220–His-222 and His-246–Ser-247 contribute to the 4-CDP-2-C-methyl-D-erythritol 2-phosphate site. His-254 is a binding site for a divalent metal cation. Residues Asp-268 to Gly-270, Phe-273 to Asp-277, Thr-344 to Glu-347, Phe-351, and Arg-354 contribute to the 4-CDP-2-C-methyl-D-erythritol 2-phosphate site.

This sequence in the N-terminal section; belongs to the IspD/TarI cytidylyltransferase family. IspD subfamily. In the C-terminal section; belongs to the IspF family. It depends on a divalent metal cation as a cofactor.

The catalysed reaction is 2-C-methyl-D-erythritol 4-phosphate + CTP + H(+) = 4-CDP-2-C-methyl-D-erythritol + diphosphate. It carries out the reaction 4-CDP-2-C-methyl-D-erythritol 2-phosphate = 2-C-methyl-D-erythritol 2,4-cyclic diphosphate + CMP. It functions in the pathway isoprenoid biosynthesis; isopentenyl diphosphate biosynthesis via DXP pathway; isopentenyl diphosphate from 1-deoxy-D-xylulose 5-phosphate: step 2/6. It participates in isoprenoid biosynthesis; isopentenyl diphosphate biosynthesis via DXP pathway; isopentenyl diphosphate from 1-deoxy-D-xylulose 5-phosphate: step 4/6. Functionally, bifunctional enzyme that catalyzes the formation of 4-diphosphocytidyl-2-C-methyl-D-erythritol from CTP and 2-C-methyl-D-erythritol 4-phosphate (MEP) (IspD), and catalyzes the conversion of 4-diphosphocytidyl-2-C-methyl-D-erythritol 2-phosphate (CDP-ME2P) to 2-C-methyl-D-erythritol 2,4-cyclodiphosphate (ME-CPP) with a corresponding release of cytidine 5-monophosphate (CMP) (IspF). This Aliarcobacter butzleri (strain RM4018) (Arcobacter butzleri) protein is Bifunctional enzyme IspD/IspF.